We begin with the raw amino-acid sequence, 531 residues long: Purine catabolism regulatory protein (531 aa).

This sequence belongs to the CdaR family.

Activates the expression of pucFG, pucH, pucI, pucJKLM and guaD, while it represses pucABCDE and its own expression. The polypeptide is Purine catabolism regulatory protein (pucR) (Bacillus subtilis (strain 168)).